We begin with the raw amino-acid sequence, 256 residues long: uncharacterized protein (256 aa).

6 consecutive transmembrane segments (helical) span residues 6–26 (TSFI…VSFL), 29–49 (LALV…GTFI), 61–81 (ISGT…GLYF), 145–165 (IIGC…TGIA), 175–195 (YYFK…IWLI), and 218–238 (IGWL…AIQF).

This sequence belongs to the DedA family.

Its subcellular location is the cell membrane. This is an uncharacterized protein from Buchnera aphidicola subsp. Acyrthosiphon pisum (strain APS) (Acyrthosiphon pisum symbiotic bacterium).